The primary structure comprises 90 residues: MNDSVKTSLKRTLVGRVVSNKMDKTVTVLIEHRVKHPIYGKYVVRSKKYHAHDEANTYNEGDLVEIQETRPVSKTKAWTVSRLVEAARVI.

It belongs to the universal ribosomal protein uS17 family. In terms of assembly, part of the 30S ribosomal subunit.

Functionally, one of the primary rRNA binding proteins, it binds specifically to the 5'-end of 16S ribosomal RNA. This chain is Small ribosomal subunit protein uS17, found in Burkholderia cenocepacia (strain ATCC BAA-245 / DSM 16553 / LMG 16656 / NCTC 13227 / J2315 / CF5610) (Burkholderia cepacia (strain J2315)).